A 194-amino-acid chain; its full sequence is Fibroblast growth factor 7 (194 aa).

Positions 1-31 (MRKWILTWILPTLLYRSCFHIICLVGTISLA) are cleaved as a signal peptide. N45 carries N-linked (GlcNAc...) asparagine glycosylation.

Belongs to the heparin-binding growth factors family. As to quaternary structure, interacts with FGFBP1. Interacts with FGFR2. Affinity between fibroblast growth factors (FGFs) and their receptors is increased by heparan sulfate glycosaminoglycans that function as coreceptors.

It localises to the secreted. Its function is as follows. Plays an important role in the regulation of embryonic development, cell proliferation and cell differentiation. Required for normal branching morphogenesis. Growth factor active on keratinocytes. Possible major paracrine effector of normal epithelial cell proliferation. The chain is Fibroblast growth factor 7 (FGF7) from Canis lupus familiaris (Dog).